The primary structure comprises 738 residues: Alcohol dehydrogenase (quinone), dehydrogenase subunit (738 aa).

Positions 1-35 (MISAVFGKRRSLSRTLTAGTICAALISGYATMASA) are cleaved as a signal peptide. Glu97 is a pyrroloquinoline quinone binding site. Cys143 and Cys144 form a disulfide bridge. Arg149 contributes to the pyrroloquinoline quinone binding site. Residue Glu217 participates in Ca(2+) binding. Pyrroloquinoline quinone is bound at residue Thr278. Asn298 and Asp343 together coordinate Ca(2+). Catalysis depends on Asp343, which acts as the Proton acceptor. Pyrroloquinoline quinone-binding residues include Lys370 and Ile584. In terms of domain architecture, Cytochrome c spans 634–738 (FDSKRTDNGY…NADGIPEQLP (105 aa)). The heme c site is built by Cys650, Cys653, His654, and Met693.

Belongs to the bacterial PQQ dehydrogenase family. In terms of assembly, the alcohol dehydrogenase multicomponent enzyme system is composed of a dehydrogenase subunit I (AdhA) and a cytochrome c subunit II (AdhB). Pyrroloquinoline quinone is required as a cofactor. It depends on Ca(2+) as a cofactor. The cofactor is heme c.

It is found in the cell membrane. It catalyses the reaction ethanol + a ubiquinone = a ubiquinol + acetaldehyde. Functionally, dehydrogenase component of the alcohol dehydrogenase multicomponent enzyme system which is involved in the production of acetic acid and in the ethanol oxidase respiratory chain. Quinohemoprotein alcohol dehydrogenase (ADH) catalyzes the oxidation of ethanol to acetaldehyde by transferring electrons to the ubiquinone embedded in the membrane phospholipids. The electrons transfer from ethanol to membranous ubiquinone occurs from pyrroloquinoline quinone (PQQ) to one heme c in subunit I (AdhA), and finally to two heme c in subunit II (AdhB). Besides ubiquinone reduction, ADH also has a ubiquinol (QH2) oxidation reaction which mediates electron transfer from ubiquinol to the non-energy generating bypass oxidase system. The electrons transfer occurs from ubiquinol (QH2) to the additional heme c within subunit II (AdhB). The sequence is that of Alcohol dehydrogenase (quinone), dehydrogenase subunit (adhA) from Gluconacetobacter polyoxogenes (Acetobacter polyoxogenes).